Consider the following 186-residue polypeptide: Elongation factor P (186 aa).

It belongs to the elongation factor P family.

The protein localises to the cytoplasm. It participates in protein biosynthesis; polypeptide chain elongation. Functionally, involved in peptide bond synthesis. Stimulates efficient translation and peptide-bond synthesis on native or reconstituted 70S ribosomes in vitro. Probably functions indirectly by altering the affinity of the ribosome for aminoacyl-tRNA, thus increasing their reactivity as acceptors for peptidyl transferase. This Prochlorococcus marinus (strain MIT 9303) protein is Elongation factor P.